The following is a 93-amino-acid chain: Early nodulin-36B (93 aa).

In Glycine max (Soybean), this protein is Early nodulin-36B.